The chain runs to 221 residues: Thiamine-phosphate synthase (221 aa).

4-amino-2-methyl-5-(diphosphooxymethyl)pyrimidine is bound by residues 46-50 (QFREK) and Asn-82. Residues Asp-83 and Asp-102 each contribute to the Mg(2+) site. Ser-121 serves as a coordination point for 4-amino-2-methyl-5-(diphosphooxymethyl)pyrimidine. 148-150 (TQS) is a binding site for 2-[(2R,5Z)-2-carboxy-4-methylthiazol-5(2H)-ylidene]ethyl phosphate. Lys-151 is a 4-amino-2-methyl-5-(diphosphooxymethyl)pyrimidine binding site. Residues Gly-180 and 200 to 201 (IS) contribute to the 2-[(2R,5Z)-2-carboxy-4-methylthiazol-5(2H)-ylidene]ethyl phosphate site.

It belongs to the thiamine-phosphate synthase family. Requires Mg(2+) as cofactor.

The catalysed reaction is 2-[(2R,5Z)-2-carboxy-4-methylthiazol-5(2H)-ylidene]ethyl phosphate + 4-amino-2-methyl-5-(diphosphooxymethyl)pyrimidine + 2 H(+) = thiamine phosphate + CO2 + diphosphate. The enzyme catalyses 2-(2-carboxy-4-methylthiazol-5-yl)ethyl phosphate + 4-amino-2-methyl-5-(diphosphooxymethyl)pyrimidine + 2 H(+) = thiamine phosphate + CO2 + diphosphate. It catalyses the reaction 4-methyl-5-(2-phosphooxyethyl)-thiazole + 4-amino-2-methyl-5-(diphosphooxymethyl)pyrimidine + H(+) = thiamine phosphate + diphosphate. Its pathway is cofactor biosynthesis; thiamine diphosphate biosynthesis; thiamine phosphate from 4-amino-2-methyl-5-diphosphomethylpyrimidine and 4-methyl-5-(2-phosphoethyl)-thiazole: step 1/1. In terms of biological role, condenses 4-methyl-5-(beta-hydroxyethyl)thiazole monophosphate (THZ-P) and 2-methyl-4-amino-5-hydroxymethyl pyrimidine pyrophosphate (HMP-PP) to form thiamine monophosphate (TMP). In Pasteurella multocida (strain Pm70), this protein is Thiamine-phosphate synthase.